The following is a 786-amino-acid chain: AT-rich interactive domain-containing protein 3 (786 aa).

The segment covering 1-16 has biased composition (low complexity); that stretch reads MENLTEIESTMESLTE. Disordered stretches follow at residues 1-182, 199-251, and 395-420; these read MENL…HHAD, SGDH…IPAN, and DTTV…NSSA. 2 stretches are compositionally biased toward basic and acidic residues: residues 18-64 and 87-97; these read ESER…HEDS and DLPKIDDEKNS. The segment covering 130–139 has biased composition (low complexity); sequence ENIVSSEVSS. Composition is skewed to basic and acidic residues over residues 141-156, 169-182, 199-219, 234-248, and 402-416; these read ILKD…RDTA, KLSE…HHAD, SGDH…ENQS, AEER…HKEI, and NNKD…ERQD. In terms of domain architecture, ARID spans 494–585; that stretch reads EEDQSAFMKE…ALLEYERHKV (92 aa). Residues 606 to 638 form a disordered region; the sequence is QASGSGRARRDAASRAMQGWHSQRLNGNGEVSD. The sHSP domain occupies 686-786; it reads VTVVDVGPPA…FVRVPLEQLE (101 aa).

This sequence belongs to the small heat shock protein (HSP20) family.

It is found in the nucleus. In Arabidopsis thaliana (Mouse-ear cress), this protein is AT-rich interactive domain-containing protein 3 (ARID3).